The following is a 274-amino-acid chain: 2,3,4,5-tetrahydropyridine-2,6-dicarboxylate N-succinyltransferase (274 aa).

Residues Arg-106 and Asp-143 each coordinate substrate.

Belongs to the transferase hexapeptide repeat family. In terms of assembly, homotrimer.

It is found in the cytoplasm. The enzyme catalyses (S)-2,3,4,5-tetrahydrodipicolinate + succinyl-CoA + H2O = (S)-2-succinylamino-6-oxoheptanedioate + CoA. Its pathway is amino-acid biosynthesis; L-lysine biosynthesis via DAP pathway; LL-2,6-diaminopimelate from (S)-tetrahydrodipicolinate (succinylase route): step 1/3. The protein is 2,3,4,5-tetrahydropyridine-2,6-dicarboxylate N-succinyltransferase of Albidiferax ferrireducens (strain ATCC BAA-621 / DSM 15236 / T118) (Rhodoferax ferrireducens).